The primary structure comprises 186 residues: Lumazine protein (186 aa).

Lumazine-binding repeat units follow at residues 1-96 and 97-186; these read MFRG…VGRG and GLTG…LNEW.

6,7-dimethyl-8-(1-D-ribityl)lumazine serves as cofactor.

Functionally, antenna protein that modulates the color of the bioluminescence emission of the luciferase. In the presence of LumP, luciferase emission is shifted to higher energy values (shorter wavelength). The chain is Lumazine protein (lumP) from Photobacterium leiognathi.